Reading from the N-terminus, the 292-residue chain is Small ribosomal subunit protein uS9m (292 aa).

The tract at residues 273–292 (VERKKPGKRKARKMPTWVKR) is disordered.

The protein belongs to the universal ribosomal protein uS9 family.

The protein localises to the mitochondrion. This Kluyveromyces marxianus (Yeast) protein is Small ribosomal subunit protein uS9m (MRPS9).